The following is a 456-amino-acid chain: Bifunctional protein GlmU (456 aa).

A pyrophosphorylase region spans residues Met-1–Lys-228. UDP-N-acetyl-alpha-D-glucosamine is bound by residues Leu-11–Gly-14, Lys-25, Gln-75, Gly-80–Thr-81, Tyr-102–Asp-104, Gly-138, Glu-153, Asn-168, and Asn-226. Asp-104 contributes to the Mg(2+) binding site. Asn-226 serves as a coordination point for Mg(2+). The tract at residues Leu-229–Ala-249 is linker. An N-acetyltransferase region spans residues Gly-250–Gln-456. 2 residues coordinate UDP-N-acetyl-alpha-D-glucosamine: Arg-332 and Lys-350. The active-site Proton acceptor is the His-362. 2 residues coordinate UDP-N-acetyl-alpha-D-glucosamine: Tyr-365 and Asn-376. Residues Ala-379, Asn-385–Tyr-386, Ser-404, Ala-422, and Arg-439 each bind acetyl-CoA.

In the N-terminal section; belongs to the N-acetylglucosamine-1-phosphate uridyltransferase family. The protein in the C-terminal section; belongs to the transferase hexapeptide repeat family. In terms of assembly, homotrimer. It depends on Mg(2+) as a cofactor.

It localises to the cytoplasm. The enzyme catalyses alpha-D-glucosamine 1-phosphate + acetyl-CoA = N-acetyl-alpha-D-glucosamine 1-phosphate + CoA + H(+). It carries out the reaction N-acetyl-alpha-D-glucosamine 1-phosphate + UTP + H(+) = UDP-N-acetyl-alpha-D-glucosamine + diphosphate. The protein operates within nucleotide-sugar biosynthesis; UDP-N-acetyl-alpha-D-glucosamine biosynthesis; N-acetyl-alpha-D-glucosamine 1-phosphate from alpha-D-glucosamine 6-phosphate (route II): step 2/2. Its pathway is nucleotide-sugar biosynthesis; UDP-N-acetyl-alpha-D-glucosamine biosynthesis; UDP-N-acetyl-alpha-D-glucosamine from N-acetyl-alpha-D-glucosamine 1-phosphate: step 1/1. It functions in the pathway bacterial outer membrane biogenesis; LPS lipid A biosynthesis. Catalyzes the last two sequential reactions in the de novo biosynthetic pathway for UDP-N-acetylglucosamine (UDP-GlcNAc). The C-terminal domain catalyzes the transfer of acetyl group from acetyl coenzyme A to glucosamine-1-phosphate (GlcN-1-P) to produce N-acetylglucosamine-1-phosphate (GlcNAc-1-P), which is converted into UDP-GlcNAc by the transfer of uridine 5-monophosphate (from uridine 5-triphosphate), a reaction catalyzed by the N-terminal domain. The sequence is that of Bifunctional protein GlmU from Neisseria meningitidis serogroup C / serotype 2a (strain ATCC 700532 / DSM 15464 / FAM18).